We begin with the raw amino-acid sequence, 80 residues long: Defensin-like protein 14 (80 aa).

The first 29 residues, Met1–Ala29, serve as a signal peptide directing secretion. Position 30 is a pyrrolidone carboxylic acid (Gln30). 4 cysteine pairs are disulfide-bonded: Cys33/Cys80, Cys44/Cys65, Cys50/Cys74, and Cys54/Cys76.

This sequence belongs to the DEFL family.

It is found in the secreted. In terms of biological role, confers broad-spectrum resistance to pathogens. Has antifungal activity in vitro. This is Defensin-like protein 14 (PDF1.3) from Arabidopsis thaliana (Mouse-ear cress).